Here is a 1978-residue protein sequence, read N- to C-terminus: Protein MOR1 (1978 aa).

2 HEAT repeats span residues 48 to 86 and 165 to 202; these read DPRLRDFGHLFRKTVADSNAPVQEKALDALIAFLRAADS and IPPKRILKMLPELFDHQDQNVRASAKGVTLELCRWIGK. The segment at 230–264 is disordered; sequence AGAKPTRKIRSEQDKEPEAEASSDVVGDGPSEEAV. The segment covering 238–247 has biased composition (basic and acidic residues); that stretch reads IRSEQDKEPE. 3 HEAT repeats span residues 322-359, 363-400, and 442-479; these read GDFSEICRTLKKLITDVNLAVAVEAIQAIGNLACGLRT, ASSRFMLPVLLEKLKEKKQSVTDPLTQTLQTMYKAGCL, and KAHKEYVPLCMECLNDGTPDVRDAAFSALAAIAKSVGM. The segment at 501–587 is disordered; that stretch reads IAGSGGGDQA…SVEPPEDVEP (87 aa). The segment covering 510–527 has biased composition (low complexity); it reads AGTSSVTVQSSVGSTATG. Positions 565 to 577 are enriched in basic and acidic residues; the sequence is GKKDGSVRNEGSK. 4 HEAT repeats span residues 849-886, 890-928, 932-969, and 1008-1045; these read DISTKITPNLLKGFESPDWKMRLESIEAVNKILEEANK, PTGTGELFGGLRGRLLDSNKNLVMQTLTTIGGVAAAMGP, KASKGILSDVLKCLGDNKKHMRECTLAALDLWLGAVHL, and VDAIHLLKPASTAMTDKSADVRKAAEGCISEILRVSGQ. Positions 1087 to 1115 are disordered; it reads SKGVTKISKSTSNGTLKQGNRSRAVPTKG. The span at 1093 to 1107 shows a compositional bias: polar residues; it reads ISKSTSNGTLKQGNR. HEAT repeat units lie at residues 1230 to 1253, 1254 to 1286, 1287 to 1325, and 1328 to 1365; these read LKVLEFLPELFNTLRDEEYCMTEA, EAAIFLPCLAEKLGHNIEKVREKMRELMKQIIQ, AYSVGKTYPYILEGLRSKNNRTRIECTDLIGYLLETCGT, and GGLLKYLNIVASLTAERDGELRKAALNTMATGYQILGA. Basic and acidic residues predominate over residues 1393–1403; sequence MEKRREGKPGE. The disordered stretch occupies residues 1393–1431; it reads MEKRREGKPGEARAALRRSVRDSGPEVAEQSGDISQTVP. One copy of the HEAT 14 repeat lies at 1535-1575; it reads RSCKYVLNTLMQTFQNKKLAHAVKEGTLESLITELLLWLLD. The tract at residues 1837–1862 is disordered; the sequence is AAAGRTPSSLPLSTPPPSSLALPSPD.

This sequence belongs to the TOG/XMAP215 family. In terms of tissue distribution, expressed in roots, cotyledons, rosette leaves, stems, open flowers and green siliques.

Its subcellular location is the cytoplasm. The protein resides in the cytoskeleton. It localises to the phragmoplast. It is found in the spindle. Functionally, microtubule-binding protein that is essential for cortical microtubules organization and function. Essential for maintaining the interphase cortical array and for correct morphogenesis. Promotes rapid growth and shrinkage of microtubules and suppresses the pausing of interphase microtubules. Regulates the structure and function of microtubule arrays during mitosis and cytokinesis. Probably not required for cellulose microfibrils alignment in roots. In Arabidopsis thaliana (Mouse-ear cress), this protein is Protein MOR1 (MOR1).